The primary structure comprises 85 residues: uncharacterized protein (85 aa).

It is found in the mitochondrion. This is an uncharacterized protein from Paramecium tetraurelia.